We begin with the raw amino-acid sequence, 599 residues long: Sulfite reductase [NADPH] flavoprotein alpha-component (599 aa).

The Flavodoxin-like domain occupies 64-202 (ITIISASQTG…AASEWRARVV (139 aa)). FMN is bound by residues 70–75 (SQTGNA), 117–120 (STQG), and 153–162 (LGDSSYEFFC). Residues 234 to 448 (DSPLVASLSV…IEHNDNFRLP (215 aa)) form the FAD-binding FR-type domain. FAD-binding positions include threonine 322, alanine 356, 386–389 (RLYS), 404–406 (TVG), tyrosine 410, and 419–422 (GGAS). Residues 519-520 (SR), 525-529 (KVYVQ), and aspartate 561 contribute to the NADP(+) site. FAD is bound at residue tyrosine 599.

It belongs to the NADPH-dependent sulphite reductase flavoprotein subunit CysJ family. This sequence in the N-terminal section; belongs to the flavodoxin family. The protein in the C-terminal section; belongs to the flavoprotein pyridine nucleotide cytochrome reductase family. In terms of assembly, alpha(8)-beta(8). The alpha component is a flavoprotein, the beta component is a hemoprotein. Requires FAD as cofactor. The cofactor is FMN.

It carries out the reaction hydrogen sulfide + 3 NADP(+) + 3 H2O = sulfite + 3 NADPH + 4 H(+). It functions in the pathway sulfur metabolism; hydrogen sulfide biosynthesis; hydrogen sulfide from sulfite (NADPH route): step 1/1. In terms of biological role, component of the sulfite reductase complex that catalyzes the 6-electron reduction of sulfite to sulfide. This is one of several activities required for the biosynthesis of L-cysteine from sulfate. The flavoprotein component catalyzes the electron flow from NADPH -&gt; FAD -&gt; FMN to the hemoprotein component. This is Sulfite reductase [NADPH] flavoprotein alpha-component from Escherichia coli O9:H4 (strain HS).